Reading from the N-terminus, the 638-residue chain is Chaperone protein HtpG (638 aa).

The tract at residues 1-345 is a; substrate-binding; sequence MTTETFEFQV…AQDLSLNVSR (345 aa). The segment at 346-560 is b; that stretch reads EILQQDRHIR…AGELTPALEN (215 aa). The interval 561-638 is c; sequence MYRAMGQEVP…LMADRLERTL (78 aa).

It belongs to the heat shock protein 90 family. In terms of assembly, homodimer.

Its subcellular location is the cytoplasm. Its function is as follows. Molecular chaperone. Has ATPase activity. The protein is Chaperone protein HtpG of Streptomyces coelicolor (strain ATCC BAA-471 / A3(2) / M145).